Consider the following 253-residue polypeptide: Flap endonuclease Xni (253 aa).

Mg(2+) is bound at residue aspartate 105. One can recognise a 5'-3' exonuclease domain in the interval 162-251; that stretch reads ERHQLLDYIA…HLKLSDLRVN (90 aa). Residues leucine 172, proline 181, isoleucine 183, and isoleucine 186 each coordinate K(+). An interaction with DNA region spans residues 185 to 190; sequence GIGPKS.

The protein belongs to the Xni family. Mg(2+) serves as cofactor. Requires K(+) as cofactor.

Its function is as follows. Has flap endonuclease activity. During DNA replication, flap endonucleases cleave the 5'-overhanging flap structure that is generated by displacement synthesis when DNA polymerase encounters the 5'-end of a downstream Okazaki fragment. The sequence is that of Flap endonuclease Xni from Shewanella amazonensis (strain ATCC BAA-1098 / SB2B).